Here is a 433-residue protein sequence, read N- to C-terminus: Urokinase-type plasminogen activator (433 aa).

Positions 1–20 are cleaved as a signal peptide; that stretch reads MKVWLASLFLCALVVKNSEG. Residues 28 to 64 form the EGF-like domain; it reads DESNCGCQNGGVCVSYKYFSRIRRCSCPRKFQGEHCE. 6 disulfides stabilise this stretch: Cys32/Cys40, Cys34/Cys52, Cys54/Cys63, Cys71/Cys152, Cys92/Cys134, and Cys123/Cys147. The tract at residues 35–58 is binds urokinase plasminogen activator surface receptor; it reads QNGGVCVSYKYFSRIRRCSCPRKF. Positions 71–152 constitute a Kringle domain; that stretch reads CYHGNGDSYR…FVQECMVHDC (82 aa). The tract at residues 153–179 is connecting peptide; sequence SLSKKPSSSVDQQGFQCGQKALRPRFK. Ser159 is modified (phosphoserine). 6 disulfides stabilise this stretch: Cys169-Cys301, Cys211-Cys227, Cys219-Cys290, Cys315-Cys384, Cys347-Cys363, and Cys374-Cys402. One can recognise a Peptidase S1 domain in the interval 180-426; sequence IVGGEFTEVE…FLDWIQSHIG (247 aa). Residues His226 and Asp277 each act as charge relay system in the active site. The active-site Charge relay system is Ser378.

The protein belongs to the peptidase S1 family. In terms of assembly, found in high and low molecular mass forms. Each consists of two chains, A and B. The high molecular mass form contains a long chain A which is cleaved to yield a short chain A. Forms heterodimer with SERPINA5. Binds LRP1B; binding is followed by internalization and degradation. Interacts with MRC2. Interacts with PLAUR. In complex with SERPINE1, interacts with PLAUR/uPAR. Interacts with SORL1 and LRP1, either alone or in complex with SERPINE1; these interactions are abolished in the presence of LRPAP1/RAP. The ternary complex composed of PLAUR-PLAU-PAI1 also interacts with SORLA. Post-translationally, produced as an inactive single-chain protein (pro-uPA or sc-uPA), is processed into the active disulfide-linked two-chain form of PLAU/uPA by a proteolytic event mediated, at least, by TMPRSS4.

Its subcellular location is the secreted. It carries out the reaction Specific cleavage of Arg-|-Val bond in plasminogen to form plasmin.. Inhibited by SERPINA5. Inhibited by SERPINE1. In terms of biological role, specifically cleaves the zymogen plasminogen to form the active enzyme plasmin. The chain is Urokinase-type plasminogen activator (Plau) from Mus musculus (Mouse).